The chain runs to 601 residues: MARANRGEHSTLSTFWQSRHNAASFDPLYRRIDVNAPEPSDSATPEKTPSKHFIRQAIDADLASGRFDGVATRFPPEPNGYLHIGHAKSICLNFGLAKDMGGTCNLRFDDTNPIKEDTEYVDSIQEDVRWLGFEWDNLHFASDYFDQLYDWAEQLVKDGKAYVCDLTAEETREYRGTLTEPGKNSPHRDRTPEKNLELLRAMKAGKFKDGEKTLRAKIDMASPNINLRDPVMYRIAHVPHHRTGDKWCIYPMYDWAHGQSDSLEKITFSICTLEFEHHRPLYNWYCENLGIHHPRQIEFARLNMTFTVMSKRKLLQLVKENHVTGWDDPRMPTLVGLRRRGYTPESIRSFCADIGVAKFNSTIDVIRLENSVREHLNSVAPRRMAVLDPIKLTITNWPEGKVEMMNAINNPEDESAGSREIPFSGELYIETEDFREEAPRKFFRLKKGGSVRLRSGYIVDCHDVVKDADGNVTEVLCTYDPETKSGEDTSGRKVKGTIHWVSREHAQKVTVRNYDRLFKVENPDASSDTGSFLDHLNPDSLTTLTAHVEPALAEAAVGDRVQFERLGYYVVDPDSTDGEIIFNRIVPLRDTWGKIEAKGKK.

Residues 76-86 (PEPNGYLHIGH) carry the 'HIGH' region motif. Residues 77–79 (EPN) and 83–89 (HIGHAKS) each bind ATP. Positions 109 and 253 each coordinate L-glutamine. Residues Thr272, 301-302 (RL), and 309-311 (MSK) contribute to the ATP site. Positions 308–312 (VMSKR) match the 'KMSKS' region motif.

Belongs to the class-I aminoacyl-tRNA synthetase family. As to quaternary structure, monomer.

It localises to the cytoplasm. It carries out the reaction tRNA(Gln) + L-glutamine + ATP = L-glutaminyl-tRNA(Gln) + AMP + diphosphate. This Rhodopirellula baltica (strain DSM 10527 / NCIMB 13988 / SH1) protein is Glutamine--tRNA ligase.